A 278-amino-acid polypeptide reads, in one-letter code: Elongation factor Ts (278 aa).

The interval 79–82 (TDFV) is involved in Mg(2+) ion dislocation from EF-Tu.

This sequence belongs to the EF-Ts family.

Its subcellular location is the cytoplasm. Its function is as follows. Associates with the EF-Tu.GDP complex and induces the exchange of GDP to GTP. It remains bound to the aminoacyl-tRNA.EF-Tu.GTP complex up to the GTP hydrolysis stage on the ribosome. The protein is Elongation factor Ts of Borrelia duttonii (strain Ly).